A 685-amino-acid chain; its full sequence is Probable cysteine desulfurase (685 aa).

Positions 1 to 282 (MTRSPCSTTS…RDEHEVFDVA (282 aa)) are cargo-loading domain. 2 disordered regions span residues 48-135 (SIRP…TSAG) and 162-185 (PTPA…VPDT). Positions 71–85 (ATAATSAGRTAAGTA) are enriched in low complexity. Residues 102-121 (LPPPASPAPEAPPQAAPPAP) show a composition bias toward pro residues. The span at 122 to 135 (RGSAPDATAATSAG) shows a compositional bias: low complexity. The span at 164–178 (PAGPEAPPQSAPPAP) shows a compositional bias: pro residues. Lys502 is subject to N6-(pyridoxal phosphate)lysine. Cys640 functions as the Cysteine persulfide intermediate in the catalytic mechanism.

The protein belongs to the class-V pyridoxal-phosphate-dependent aminotransferase family. Csd subfamily. In terms of assembly, isolated from bacteria in a complex with encapsulin 2A (AC I3NID5), strongly suggesting it is found in a type 2A encapsulin nanocompartment. There are 1-2 copies of this protein in each encapsulin shell. The cofactor is pyridoxal 5'-phosphate.

Its subcellular location is the encapsulin nanocompartment. It localises to the cell membrane. The catalysed reaction is (sulfur carrier)-H + L-cysteine = (sulfur carrier)-SH + L-alanine. Functionally, cargo protein of a type 2A encapsulin nanocompartment involved in sulfur metabolism. Cysteine desulfurases mobilize the sulfur from L-cysteine to yield L-alanine, an essential step in sulfur metabolism for biosynthesis of a variety of sulfur-containing biomolecules. The polypeptide is Probable cysteine desulfurase (Mycolicibacterium paratuberculosis (strain ATCC BAA-968 / K-10) (Mycobacterium paratuberculosis)).